A 409-amino-acid chain; its full sequence is Galactosylgalactosylxylosylprotein 3-beta-glucuronosyltransferase S (409 aa).

Residues 1–45 (MSSARLLESQTSDEDNEDIERRPHQSHSRSCSNNTTPTHPPHPMV) are disordered. Over 1 to 53 (MSSARLLESQTSDEDNEDIERRPHQSHSRSCSNNTTPTHPPHPMVRKGGVARR) the chain is Cytoplasmic. S9 bears the Phosphoserine mark. At T11 the chain carries Phosphothreonine. Residues S12 and S32 each carry the phosphoserine modification. A helical; Signal-anchor for type II membrane protein membrane pass occupies residues 54–73 (ICLIGGALFLLLVALCYLTL). Residues 74 to 409 (SGDTRLGGSE…RENPHSKILS (336 aa)) lie on the Lumenal side of the membrane. N102 and N223 each carry an N-linked (GlcNAc...) asparagine glycan. D235 provides a ligand contact to Mn(2+). E318 (proton acceptor) is an active-site residue. N-linked (GlcNAc...) asparagine glycosylation occurs at N338. The segment at 389-409 (EGRNALISKNGRENPHSKILS) is disordered. Positions 398–409 (NGRENPHSKILS) are enriched in basic and acidic residues.

The protein belongs to the glycosyltransferase 43 family. Mn(2+) is required as a cofactor.

The protein localises to the golgi apparatus membrane. The catalysed reaction is 3-O-(beta-D-galactosyl-(1-&gt;3)-beta-D-galactosyl-(1-&gt;4)-beta-D-xylosyl)-L-seryl-[protein] + UDP-alpha-D-glucuronate = 3-O-(beta-D-GlcA-(1-&gt;3)-beta-D-Gal-(1-&gt;3)-beta-D-Gal-(1-&gt;4)-beta-D-Xyl)-L-seryl-[protein] + UDP + H(+). The protein operates within protein modification; protein glycosylation. In terms of biological role, involved in the biosynthesis of L2/HNK-1 carbohydrate epitope on both glycolipids and glycoproteins. Enzyme has a broad specificity. The protein is Galactosylgalactosylxylosylprotein 3-beta-glucuronosyltransferase S (GlcAT-S) of Drosophila melanogaster (Fruit fly).